The sequence spans 165 residues: MSHPALTRLRALRYFDAIPALEPHLLDWLLLEDSMTKRFEQQGKRVSVTLIREAFVGQSEVEEASGLLPSESRYWLREILLCADGEPWLAGRTVVPESTLCGPEQVLQHLGKTPLGRYLFTSSTLTRDFIEIGRDATLWGRRSRLRLSGKPLLLTELFLPASPLY.

Residues methionine 35, arginine 77, leucine 115, and glutamate 156 each coordinate substrate.

This sequence belongs to the UbiC family. As to quaternary structure, monomer.

It is found in the cytoplasm. It carries out the reaction chorismate = 4-hydroxybenzoate + pyruvate. Its pathway is cofactor biosynthesis; ubiquinone biosynthesis. In terms of biological role, removes the pyruvyl group from chorismate, with concomitant aromatization of the ring, to provide 4-hydroxybenzoate (4HB) for the ubiquinone pathway. The chain is Chorismate pyruvate-lyase from Salmonella agona (strain SL483).